A 794-amino-acid chain; its full sequence is cAMP and cAMP-inhibited cGMP 3',5'-cyclic phosphodiesterase 10A (794 aa).

3',5'-cyclic AMP contacts are provided by residues 296–297, 340–341, threonine 374, glutamine 393, and histidine 525; these read RC and IA. Residues 452–769 enclose the PDEase domain; the sequence is TSEEWQGLMH…NQWEKVIRGE (318 aa). Histidine 525 acts as the Proton donor in catalysis. Residue histidine 525 participates in 3',5'-cyclic GMP binding. A divalent metal cation-binding residues include histidine 529, histidine 563, aspartate 564, and aspartate 674. Glutamine 726 is a 3',5'-cyclic AMP binding site. Residue glutamine 726 participates in 3',5'-cyclic GMP binding.

The protein belongs to the cyclic nucleotide phosphodiesterase family. Homodimer. Requires a divalent metal cation as cofactor. Detected in striatum and testis (at protein level). Detected in whole brain, hippocampus, olfactory bulb, striatum neurons and testis.

It localises to the cytoplasm. The protein localises to the cytosol. It catalyses the reaction a nucleoside 3',5'-cyclic phosphate + H2O = a nucleoside 5'-phosphate + H(+). It carries out the reaction 3',5'-cyclic AMP + H2O = AMP + H(+). The enzyme catalyses 3',5'-cyclic GMP + H2O = GMP + H(+). Its pathway is purine metabolism; 3',5'-cyclic AMP degradation; AMP from 3',5'-cyclic AMP: step 1/1. It participates in purine metabolism; 3',5'-cyclic GMP degradation; GMP from 3',5'-cyclic GMP: step 1/1. Inhibited by dipyridamole and moderately by IBMX, zaprinast and rolipram. Functionally, plays a role in signal transduction by regulating the intracellular concentration of cyclic nucleotides. Can hydrolyze both cAMP and cGMP, but has higher affinity for cAMP and is more efficient with cAMP as substrate. This Rattus norvegicus (Rat) protein is cAMP and cAMP-inhibited cGMP 3',5'-cyclic phosphodiesterase 10A (Pde10a).